We begin with the raw amino-acid sequence, 166 residues long: tRNA-acetylating toxin (166 aa).

The disordered stretch occupies residues 1–22 (MSGYSAPRRISDADDVTSFSSG). One can recognise an N-acetyltransferase domain in the interval 1-162 (MSGYSAPRRI…LMLLMKDARA (162 aa)). Residue Tyr-138 is part of the active site.

The protein belongs to the acetyltransferase family. GNAT subfamily. As to quaternary structure, homodimer, forms a complex with cognate antitoxin TacA.

It carries out the reaction glycyl-tRNA(Gly) + acetyl-CoA = N-acetylglycyl-tRNA(Gly) + CoA + H(+). Its function is as follows. Toxic component of a type II toxin-antitoxin (TA) system. Overexpression of this gene alone in M.smegmatis inhibits growth, while overexpression of the tacA-tacT operon does not. Acetylates glycyl-tRNA(Gly) but not other tRNAs, blocks in vitro translation in the presence, but not absence, of acetyl-coenzyme A. Peptidyl-tRNA hydrolase (pth) counteracts the product of this enzyme in vitro. Neutralized by cognate antitoxin TacA. Does not seem to be active in laboratory growth conditions. Functionally, tacA-TacT both represses and derepresses expression of its own operon. The protein is tRNA-acetylating toxin of Mycobacterium tuberculosis (strain ATCC 25618 / H37Rv).